We begin with the raw amino-acid sequence, 624 residues long: Chaperone protein HtpG (624 aa).

The tract at residues 1-336 is a; substrate-binding; that stretch reads MKGQETRGFQ…SNDLPLNVSR (336 aa). The b stretch occupies residues 337–552; it reads EILQDSTVTR…ADEMSTQMAK (216 aa). A c region spans residues 553 to 624; sequence LFAAAGQSVP…IRRMNQLLVS (72 aa).

Belongs to the heat shock protein 90 family. In terms of assembly, homodimer.

It localises to the cytoplasm. Its function is as follows. Molecular chaperone. Has ATPase activity. The chain is Chaperone protein HtpG from Salmonella paratyphi B (strain ATCC BAA-1250 / SPB7).